Here is a 521-residue protein sequence, read N- to C-terminus: Bifunctional purine biosynthesis protein PurH (521 aa).

The region spanning 1–145 is the MGS-like domain; the sequence is MIKQALISVS…KNHRDVTVVV (145 aa).

The protein belongs to the PurH family.

It catalyses the reaction (6R)-10-formyltetrahydrofolate + 5-amino-1-(5-phospho-beta-D-ribosyl)imidazole-4-carboxamide = 5-formamido-1-(5-phospho-D-ribosyl)imidazole-4-carboxamide + (6S)-5,6,7,8-tetrahydrofolate. The catalysed reaction is IMP + H2O = 5-formamido-1-(5-phospho-D-ribosyl)imidazole-4-carboxamide. It functions in the pathway purine metabolism; IMP biosynthesis via de novo pathway; 5-formamido-1-(5-phospho-D-ribosyl)imidazole-4-carboxamide from 5-amino-1-(5-phospho-D-ribosyl)imidazole-4-carboxamide (10-formyl THF route): step 1/1. It participates in purine metabolism; IMP biosynthesis via de novo pathway; IMP from 5-formamido-1-(5-phospho-D-ribosyl)imidazole-4-carboxamide: step 1/1. In Burkholderia cenocepacia (strain ATCC BAA-245 / DSM 16553 / LMG 16656 / NCTC 13227 / J2315 / CF5610) (Burkholderia cepacia (strain J2315)), this protein is Bifunctional purine biosynthesis protein PurH.